The following is a 71-amino-acid chain: Vitellogenin-A1 (71 aa).

An N-terminal signal peptide occupies residues 1-15; it reads MRGIILALLLAIAGS. The Vitellogenin domain occupies 24–71; sequence FSESKTSVYNYEAVILNGFPESGLSRAGIKINCKVEISAYAQRSYFLK.

Produced by the liver, secreted into the blood and then sequestered by receptor mediated endocytosis into growing oocytes, where it is generally cleaved, giving rise to the respective yolk components.

Precursor of the major egg-yolk proteins that are sources of nutrients during early development of oviparous organisms. The protein is Vitellogenin-A1 of Xenopus laevis (African clawed frog).